The primary structure comprises 58 residues: Large ribosomal subunit protein bL32 (58 aa).

It belongs to the bacterial ribosomal protein bL32 family.

In Staphylococcus aureus (strain NCTC 8325 / PS 47), this protein is Large ribosomal subunit protein bL32.